Here is a 149-residue protein sequence, read N- to C-terminus: MKSTLRISLKSGEKIFINGAVLRVDRKVALEFLNDVTFLLENHVLQPDQATTPLRQLYFIAQMILINPEGREQSTNMFRKSVSMLLNCFQHDEILAELKRIDGLVASGKAFEALKAIRGLYTIEEKILSNQEMTPATIEQIRKEIAPWR.

This sequence belongs to the FlbT family.

In terms of biological role, has a post-transcriptional repressor function in flagellum biogenesis. Associates with the 5'-UTR of fljK mRNA and promotes its degradation. The protein is Probable flagellum biosynthesis repressor protein FlbT of Agrobacterium fabrum (strain C58 / ATCC 33970) (Agrobacterium tumefaciens (strain C58)).